Consider the following 140-residue polypeptide: ATP synthase epsilon chain (140 aa).

Belongs to the ATPase epsilon chain family. F-type ATPases have 2 components, CF(1) - the catalytic core - and CF(0) - the membrane proton channel. CF(1) has five subunits: alpha(3), beta(3), gamma(1), delta(1), epsilon(1). CF(0) has three main subunits: a, b and c.

The protein localises to the cell inner membrane. Functionally, produces ATP from ADP in the presence of a proton gradient across the membrane. In Xanthomonas oryzae pv. oryzae (strain MAFF 311018), this protein is ATP synthase epsilon chain.